The primary structure comprises 163 residues: Cyclic pyranopterin monophosphate synthase (163 aa).

Residues 75–77 and 115–116 each bind substrate; these read LCH and ME. The active site involves D130.

Belongs to the MoaC family. Homohexamer; trimer of dimers.

The enzyme catalyses (8S)-3',8-cyclo-7,8-dihydroguanosine 5'-triphosphate = cyclic pyranopterin phosphate + diphosphate. It functions in the pathway cofactor biosynthesis; molybdopterin biosynthesis. Its function is as follows. Catalyzes the conversion of (8S)-3',8-cyclo-7,8-dihydroguanosine 5'-triphosphate to cyclic pyranopterin monophosphate (cPMP). This chain is Cyclic pyranopterin monophosphate synthase, found in Variovorax paradoxus (strain S110).